The sequence spans 444 residues: Phosphoglucosamine mutase (444 aa).

Catalysis depends on serine 101, which acts as the Phosphoserine intermediate. Residues serine 101, aspartate 240, aspartate 242, and aspartate 244 each contribute to the Mg(2+) site. Serine 101 bears the Phosphoserine mark.

Belongs to the phosphohexose mutase family. Mg(2+) is required as a cofactor. Activated by phosphorylation.

It catalyses the reaction alpha-D-glucosamine 1-phosphate = D-glucosamine 6-phosphate. Catalyzes the conversion of glucosamine-6-phosphate to glucosamine-1-phosphate. This Aeromonas hydrophila subsp. hydrophila (strain ATCC 7966 / DSM 30187 / BCRC 13018 / CCUG 14551 / JCM 1027 / KCTC 2358 / NCIMB 9240 / NCTC 8049) protein is Phosphoglucosamine mutase.